A 314-amino-acid polypeptide reads, in one-letter code: L-lactate dehydrogenase 2 (314 aa).

NAD(+) is bound by residues valine 16, aspartate 37, lysine 42, tyrosine 68, and 82-83 (GL). Residues glutamine 85, arginine 91, and 123–126 (NPVD) each bind substrate. NAD(+) is bound by residues 121–123 (ATN) and serine 146. 151-154 (DSAR) is a binding site for substrate. Beta-D-fructose 1,6-bisphosphate-binding residues include arginine 156 and histidine 171. The Proton acceptor role is filled by histidine 178. Tyrosine 223 is modified (phosphotyrosine). Threonine 232 provides a ligand contact to substrate.

The protein belongs to the LDH/MDH superfamily. LDH family. Homotetramer.

It is found in the cytoplasm. It carries out the reaction (S)-lactate + NAD(+) = pyruvate + NADH + H(+). It participates in fermentation; pyruvate fermentation to lactate; (S)-lactate from pyruvate: step 1/1. With respect to regulation, allosterically activated by fructose 1,6-bisphosphate (FBP). Catalyzes the conversion of lactate to pyruvate. The polypeptide is L-lactate dehydrogenase 2 (Bacillus cereus (strain ATCC 14579 / DSM 31 / CCUG 7414 / JCM 2152 / NBRC 15305 / NCIMB 9373 / NCTC 2599 / NRRL B-3711)).